Here is a 364-residue protein sequence, read N- to C-terminus: MFWGIEISKVPVKFTPAFDLHITTACLSAVAKDTGRNVLQVKYDGKTYSLCSLKLNATEHSVLDTNFEEGKEVEFSVSGNNTICLTGYFVDSMFGDDEHGEDEDNEEEEGEEGEDEEMEGEDEDEDEEDEDEEDEDEEEEDDEEDDEINKELERQILEQALKRKAQIEADKNKQQKKPKQEEPVKQVTPVKPTAQAAKPTAATTTTTTTTTTTPTKQTTPAKPAAKPVTPTKPVTPTKPVEAAVVEKKKPTSSVVTLPSGLQYEDLVVGSGPSPKSGKKVGVKYIGKLTNGKTFDSSLRTPFTFRIGIREVIRGWDIGVASMKVGGKRRLTIPADLAYGRSGAPPSIPPNATLIFDVELVSCAQ.

2 disordered regions span residues 92–148 (SMFG…DDEI) and 168–239 (EADK…PTKP). Over residues 94–148 (FGDDEHGEDEDNEEEEGEEGEDEEMEGEDEDEDEEDEDEEDEDEEEEDDEEDDEI) the composition is skewed to acidic residues. Positions 168 to 184 (EADKNKQQKKPKQEEPV) are enriched in basic and acidic residues. A compositionally biased stretch (low complexity) spans 185–239 (KQVTPVKPTAQAAKPTAATTTTTTTTTTTPTKQTTPAKPAAKPVTPTKPVTPTKP). Residues 277-363 (GKKVGVKYIG…IFDVELVSCA (87 aa)) form the PPIase FKBP-type domain.

Belongs to the FKBP-type PPIase family. In terms of assembly, binds to histones H3 and H4.

It localises to the nucleus. The enzyme catalyses [protein]-peptidylproline (omega=180) = [protein]-peptidylproline (omega=0). With respect to regulation, inhibited by both FK506 and rapamycin. Its function is as follows. PPIase that acts as a histone chaperone. Histone proline isomerase that increases the rate of cis-trans isomerization at prolines on the histone H3 N-terminal tail. Proline isomerization influences H3 methylation thereby regulating gene expression. The chain is FK506-binding protein 4 (fkbp4) from Dictyostelium discoideum (Social amoeba).